The following is a 79-amino-acid chain: U-actitoxin-Avd8b (79 aa).

Residues 1–19 (MKSLVIVFVVLLGVAMISA) form the signal peptide. A propeptide spanning residues 20 to 36 (NEEELLAILQDQRNDAR) is cleaved from the precursor.

Belongs to the sea anemone 8 toxin family.

The protein resides in the secreted. Its subcellular location is the nematocyst. In Anemonia viridis (Snakelocks anemone), this protein is U-actitoxin-Avd8b.